The chain runs to 311 residues: Forkhead box protein R2 (311 aa).

Disordered stretches follow at residues 56 to 76 and 90 to 171; these read PPEM…PCEP and LGSQ…QSPE. The segment covering 115-128 has biased composition (basic and acidic residues); it reads QKDEGSNCSEDKVV. Positions 129-143 are enriched in low complexity; it reads ESLPSSSSEQSPLQK. The segment covering 153 to 164 has biased composition (acidic residues); it reads ELTEEEAEEPDD. Residues 192–294 constitute a DNA-binding region (fork-head); it reads RPPLNCSHLI…RVLAFAQRER (103 aa).

In terms of tissue distribution, expressed in breast cancer cell lines and primary cancer.

The protein resides in the nucleus. This chain is Forkhead box protein R2 (FOXR2), found in Homo sapiens (Human).